The following is a 270-amino-acid chain: Ribosomal RNA-processing protein 7 homolog (270 aa).

Residues 233-268 (TFQIKKNRQEKAQELLKKFEEDRKRITQLKQARNFK) adopt a coiled-coil conformation.

It belongs to the RRP7 family.

The sequence is that of Ribosomal RNA-processing protein 7 homolog from Caenorhabditis elegans.